The primary structure comprises 950 residues: Protocadherin alpha-8 (950 aa).

A signal peptide spans 1 to 29; it reads MVYHWRGDLGSWRLLLLLLLLAAWKVGSG. 6 consecutive Cadherin domains span residues 30–133, 157–242, 243–350, 351–455, 456–565, and 581–678; these read QLHY…PPVF, ASDA…APNF, EQSE…VPEI, ALTS…APAF, AQPE…APAL, and VPRS…APKA. The Extracellular segment spans residues 30–697; the sequence is QLHYSVPEEA…GPEAALVDVN (668 aa). 2 N-linked (GlcNAc...) asparagine glycosylation sites follow: asparagine 257 and asparagine 265. N-linked (GlcNAc...) asparagine glycosylation is present at asparagine 548. Residues 698 to 718 form a helical membrane-spanning segment; sequence VYLIIAICAVSSLLVLTLLLY. Topologically, residues 719–950 are cytoplasmic; sequence TALRCSALPT…GNSTTDNSDQ (232 aa). PXXP repeat units lie at residues 774-777, 799-802, 832-835, 873-876, and 891-894; these read PCLP, PRQP, PGGP, PGNP, and PGSP. Residues 774 to 894 are 5 X 4 AA repeats of P-X-X-P; that stretch reads PCLPPDLGSV…PDKFIIPGSP (121 aa). Residues 831-950 form a disordered region; sequence GPGGPDQQWP…GNSTTDNSDQ (120 aa). The span at 909–923 shows a compositional bias: basic and acidic residues; sequence DKSDFITFGKKEETK.

The protein localises to the cell membrane. In terms of biological role, potential calcium-dependent cell-adhesion protein. May be involved in the establishment and maintenance of specific neuronal connections in the brain. This chain is Protocadherin alpha-8 (PCDHA8), found in Pan troglodytes (Chimpanzee).